The sequence spans 634 residues: Chaperone protein HtpG (634 aa).

The a; substrate-binding stretch occupies residues M1–R342. The interval E343–Q559 is b. Residues L560–A634 form a c region.

This sequence belongs to the heat shock protein 90 family. Homodimer.

Its subcellular location is the cytoplasm. Molecular chaperone. Has ATPase activity. This Xanthomonas campestris pv. campestris (strain 8004) protein is Chaperone protein HtpG.